A 178-amino-acid polypeptide reads, in one-letter code: Crossover junction endodeoxyribonuclease RuvC (178 aa).

Residues Asp7, Glu67, and Asp139 contribute to the active site. Residues Asp7, Glu67, and Asp139 each contribute to the Mg(2+) site.

This sequence belongs to the RuvC family. In terms of assembly, homodimer which binds Holliday junction (HJ) DNA. The HJ becomes 2-fold symmetrical on binding to RuvC with unstacked arms; it has a different conformation from HJ DNA in complex with RuvA. In the full resolvosome a probable DNA-RuvA(4)-RuvB(12)-RuvC(2) complex forms which resolves the HJ. The cofactor is Mg(2+).

The protein resides in the cytoplasm. It catalyses the reaction Endonucleolytic cleavage at a junction such as a reciprocal single-stranded crossover between two homologous DNA duplexes (Holliday junction).. The RuvA-RuvB-RuvC complex processes Holliday junction (HJ) DNA during genetic recombination and DNA repair. Endonuclease that resolves HJ intermediates. Cleaves cruciform DNA by making single-stranded nicks across the HJ at symmetrical positions within the homologous arms, yielding a 5'-phosphate and a 3'-hydroxyl group; requires a central core of homology in the junction. The consensus cleavage sequence is 5'-(A/T)TT(C/G)-3'. Cleavage occurs on the 3'-side of the TT dinucleotide at the point of strand exchange. HJ branch migration catalyzed by RuvA-RuvB allows RuvC to scan DNA until it finds its consensus sequence, where it cleaves and resolves the cruciform DNA. The protein is Crossover junction endodeoxyribonuclease RuvC of Trichlorobacter lovleyi (strain ATCC BAA-1151 / DSM 17278 / SZ) (Geobacter lovleyi).